The following is a 254-amino-acid chain: UPF0328 protein ECU01_0070/ECU01_1540/ECU02_1570/ECU04_0080/ECU08_2100 (254 aa).

It belongs to the UPF0328 family.

This chain is UPF0328 protein ECU01_0070/ECU01_1540/ECU02_1570/ECU04_0080/ECU08_2100, found in Encephalitozoon cuniculi (strain GB-M1) (Microsporidian parasite).